Consider the following 85-residue polypeptide: Putative membrane protein insertion efficiency factor (85 aa).

It belongs to the UPF0161 family.

Its subcellular location is the cell inner membrane. Its function is as follows. Could be involved in insertion of integral membrane proteins into the membrane. This Vibrio atlanticus (strain LGP32) (Vibrio splendidus (strain Mel32)) protein is Putative membrane protein insertion efficiency factor.